The following is a 239-amino-acid chain: Probable 2-phosphosulfolactate phosphatase (239 aa).

Belongs to the ComB family. Requires Mg(2+) as cofactor.

The enzyme catalyses (2R)-O-phospho-3-sulfolactate + H2O = (2R)-3-sulfolactate + phosphate. This is Probable 2-phosphosulfolactate phosphatase from Clostridium botulinum (strain Langeland / NCTC 10281 / Type F).